Consider the following 356-residue polypeptide: tRNA-specific 2-thiouridylase MnmA (356 aa).

ATP-binding positions include 6-13 (AMSGGVDS) and leucine 32. The active-site Nucleophile is the cysteine 101. Cysteine 101 and cysteine 193 are oxidised to a cystine. Position 125 (glycine 125) interacts with ATP. The tract at residues 143 to 145 (KDQ) is interaction with tRNA. Cysteine 193 serves as the catalytic Cysteine persulfide intermediate.

The protein belongs to the MnmA/TRMU family.

Its subcellular location is the cytoplasm. It catalyses the reaction S-sulfanyl-L-cysteinyl-[protein] + uridine(34) in tRNA + AH2 + ATP = 2-thiouridine(34) in tRNA + L-cysteinyl-[protein] + A + AMP + diphosphate + H(+). In terms of biological role, catalyzes the 2-thiolation of uridine at the wobble position (U34) of tRNA, leading to the formation of s(2)U34. In Mycobacteroides abscessus (strain ATCC 19977 / DSM 44196 / CCUG 20993 / CIP 104536 / JCM 13569 / NCTC 13031 / TMC 1543 / L948) (Mycobacterium abscessus), this protein is tRNA-specific 2-thiouridylase MnmA.